The primary structure comprises 440 residues: Ferreportin (440 aa).

The Cytoplasmic segment spans residues 1-8; it reads MKVQSLLR. A helical membrane pass occupies residues 9 to 38; sequence IETQLLLGRLLTRSGDQAWDFVVPFALLVI. D24 is a Ca(2+) binding site. Residues 39 to 42 are Extracellular-facing; the sequence is FPGK. The chain crosses the membrane as a helical span at residues 43–69; that stretch reads LQVAAFYYLIVKIGTFLLTPSSGKWID. The Cytoplasmic segment spans residues 70-72; sequence THP. A helical transmembrane segment spans residues 73-103; sequence RIQVVKWGVWLQFFAILAGMVFFGMLDGLVR. Residue Q84 coordinates Ca(2+). Over 104–109 the chain is Extracellular; it reads AGGRES. The helical transmembrane segment at 110-145 threads the bilayer; it reads WLLSVLFIALALSGVMASLGSQITDISVGNDLAPSL. Residues 146 to 147 are Cytoplasmic-facing; sequence VA. A helical membrane pass occupies residues 148–176; that stretch reads PEKLTHFNSWLRRIDLATEVGAPILAGAL. Over 177 to 186 the chain is Extracellular; sequence FAFHPEQLPL. A helical membrane pass occupies residues 187-213; the sequence is AGLFLIGLWNLVSFVPEYFLLRNVIQR. The Ca(2+) site is built by N196 and E203. At 214–242 the chain is on the cytoplasmic side; it reads SGLKIKVLTEAQSWKDTFHINLRGSFSDP. A helical transmembrane segment spans residues 243–271; that stretch reads IFWLILSYALLWLSVLSPHGVLLAAYLKD. Residues 272 to 276 lie on the Extracellular side of the membrane; that stretch reads EMRLP. The helical transmembrane segment at 277-304 threads the bilayer; sequence ETEIGLFRGLGAVFGLISTVSFPYLVRR. At 305–306 the chain is on the cytoplasmic side; it reads LG. The chain crosses the membrane as a helical span at residues 307–329; sequence LISSSRWHLGFQGVTLGIAVTAF. The Extracellular portion of the chain corresponds to 330 to 335; the sequence is AMGSTA. The helical transmembrane segment at 336–365 threads the bilayer; it reads SVYVFLGCILLSRVGLYGFSNGEFELRQRL. The Cytoplasmic segment spans residues 366-370; that stretch reads IPEGR. The helical transmembrane segment at 371–395 threads the bilayer; that stretch reads RGELNSLSSLTTTSATLILFSAGSL. The Extracellular segment spans residues 396–398; that stretch reads LPQ. A helical transmembrane segment spans residues 399 to 424; sequence TEDFKYLVYVSLAAVLLANVVFIKWS. The Cytoplasmic portion of the chain corresponds to 425–440; the sequence is SRQGVVTSGAAEPVES.

This sequence belongs to the ferroportin (FP) (TC 2.A.100) family. Ca(2+) is required as a cofactor.

The protein resides in the cell membrane. Iron transpoter that exports Fe(2+) from the cell. Also binds to Co(2+) and Ni(2+). May act as a multivalent divalent metal transporter. The transporter is composed of 12 transmembrane (TM) helices organized into N-terminal (TM1-6) and C-terminal (TM7-12) domains. The substrate-binding site is formed at the interface of the two domains and is alternately accessible from either side of the membrane. The transport cycle is viewed as a series of ligand-induced conformational changes that include open outward and open inward states. This is Ferreportin (slc39) from Bdellovibrio bacteriovorus (strain ATCC 15356 / DSM 50701 / NCIMB 9529 / HD100).